The primary structure comprises 122 residues: MIQLESYLRVADNSGAKVIKVIQVSGGSKRKTGSIGDIVVASVREAVPNTDIKKGDIVRAVVVRTKKEIRRPDGTYIRFDDNAAVIIDKQNQPKGTRVFGPVARELREKGFSKIASLAQEVW.

It belongs to the universal ribosomal protein uL14 family. Part of the 50S ribosomal subunit. Forms a cluster with proteins L3 and L19. In the 70S ribosome, L14 and L19 interact and together make contacts with the 16S rRNA in bridges B5 and B8.

Its function is as follows. Binds to 23S rRNA. Forms part of two intersubunit bridges in the 70S ribosome. The chain is Large ribosomal subunit protein uL14 from Kosmotoga olearia (strain ATCC BAA-1733 / DSM 21960 / TBF 19.5.1).